The sequence spans 227 residues: RNA-free ribonuclease P (227 aa).

This sequence belongs to the HARP family.

It catalyses the reaction Endonucleolytic cleavage of RNA, removing 5'-extranucleotides from tRNA precursor.. RNA-free RNase P that catalyzes the removal of the 5'-leader sequence from pre-tRNA to produce the mature 5'-terminus. In Archaeoglobus fulgidus (strain ATCC 49558 / DSM 4304 / JCM 9628 / NBRC 100126 / VC-16), this protein is RNA-free ribonuclease P.